We begin with the raw amino-acid sequence, 193 residues long: Chaperone protein TorD (193 aa).

The protein belongs to the TorD/DmsD family. TorD subfamily.

It is found in the cytoplasm. Its function is as follows. Involved in the biogenesis of TorA. Acts on TorA before the insertion of the molybdenum cofactor and, as a result, probably favors a conformation of the apoenzyme that is competent for acquiring the cofactor. The protein is Chaperone protein TorD of Histophilus somni (strain 129Pt) (Haemophilus somnus).